The sequence spans 693 residues: Kinesin-like protein KIFC1 (693 aa).

Disordered stretches follow at residues 1–24 (MRGR…VRTT) and 48–156 (VKSS…KRPA). Low complexity-rich tracts occupy residues 49–59 (KSSSRLPLPGS) and 127–138 (QKPAPAAPAQKP). Ser-52 and Ser-59 each carry phosphoserine. Residues 165 to 334 (DLHEELKQYR…QELKGNIRVF (170 aa)) are a coiled coil. A Kinesin motor domain is found at 330–683 (NIRVFCRVRP…LRFASKVNQC (354 aa)). Thr-379 carries the phosphothreonine modification. 430 to 437 (GQTGSGKT) is a binding site for ATP.

The protein belongs to the TRAFAC class myosin-kinesin ATPase superfamily. Kinesin family. NCD subfamily. As to quaternary structure, binds NUBP1 and NUBP2. Interacts with PPP1R42.

The protein resides in the nucleus. It is found in the cytoplasm. Its subcellular location is the cytoskeleton. It localises to the microtubule organizing center. The protein localises to the centrosome. The protein resides in the spindle. It is found in the early endosome. Functionally, minus end-directed microtubule-dependent motor required for bipolar spindle formation. May contribute to movement of early endocytic vesicles. Regulates cilium formation and structure. In Rattus norvegicus (Rat), this protein is Kinesin-like protein KIFC1.